The chain runs to 29 residues: KDGYLVGTDGCKYGCFTRPGHFCANEECL.

The region spanning 1-29 is the LCN-type CS-alpha/beta domain; that stretch reads KDGYLVGTDGCKYGCFTRPGHFCANEECL.

It belongs to the long (4 C-C) scorpion toxin superfamily. Sodium channel inhibitor family. Beta subfamily. In terms of tissue distribution, expressed by the venom gland.

The protein localises to the secreted. Its function is as follows. Binds voltage-independently to sodium channels (Nav) and shifts the voltage of activation toward more negative potentials. This toxin is active against mammals and also affects neuromuscular preparations of frog. This chain is Toxin TdII-3, found in Tityus discrepans (Venezuelan scorpion).